We begin with the raw amino-acid sequence, 189 residues long: dCTP deaminase (189 aa).

DCTP is bound by residues 112–117, 136–138, Gln-157, Tyr-171, and Gln-181; these read KSTYAR and TLE. Catalysis depends on Glu-138, which acts as the Proton donor/acceptor.

Belongs to the dCTP deaminase family. In terms of assembly, homotrimer.

It carries out the reaction dCTP + H2O + H(+) = dUTP + NH4(+). It functions in the pathway pyrimidine metabolism; dUMP biosynthesis; dUMP from dCTP (dUTP route): step 1/2. Functionally, catalyzes the deamination of dCTP to dUTP. The protein is dCTP deaminase of Methylacidiphilum infernorum (isolate V4) (Methylokorus infernorum (strain V4)).